We begin with the raw amino-acid sequence, 257 residues long: Acetylglutamate kinase (257 aa).

Residues 43–44, Arg-65, and Asn-157 contribute to the substrate site; that span reads GG. Residues 180–185 and 208–210 contribute to the ATP site; these read DISSIL and IIT.

It belongs to the acetylglutamate kinase family. ArgB subfamily. As to quaternary structure, homodimer.

It is found in the cytoplasm. The enzyme catalyses N-acetyl-L-glutamate + ATP = N-acetyl-L-glutamyl 5-phosphate + ADP. It functions in the pathway amino-acid biosynthesis; L-arginine biosynthesis; N(2)-acetyl-L-ornithine from L-glutamate: step 2/4. Its function is as follows. Catalyzes the ATP-dependent phosphorylation of N-acetyl-L-glutamate. This Buchnera aphidicola subsp. Acyrthosiphon pisum (strain 5A) protein is Acetylglutamate kinase.